Reading from the N-terminus, the 260-residue chain is Snake venom serine protease Dav-X (260 aa).

An N-terminal signal peptide occupies residues 1-18 (MVLIRVLANLLILQLSYA). A propeptide spanning residues 19 to 24 (QKSSEL) is cleaved from the precursor. Residues 25–251 (VIGGVECDIN…YTDWIQNIIA (227 aa)) enclose the Peptidase S1 domain. Disulfide bonds link Cys31-Cys165, Cys52-Cys68, Cys102-Cys258, Cys144-Cys212, Cys176-Cys191, and Cys202-Cys227. His67 serves as the catalytic Charge relay system. Asn81 is a glycosylation site (N-linked (GlcNAc...) asparagine). The Charge relay system role is filled by Asp112. N-linked (GlcNAc...) asparagine glycans are attached at residues Asn124 and Asn172. Ser206 (charge relay system) is an active-site residue. The N-linked (GlcNAc...) asparagine glycan is linked to Asn241.

This sequence belongs to the peptidase S1 family. Snake venom subfamily. As to quaternary structure, monomer. Expressed by the venom gland.

The protein resides in the secreted. In terms of biological role, snake venom serine protease that may act in the hemostasis system of the prey. The sequence is that of Snake venom serine protease Dav-X from Deinagkistrodon acutus (Hundred-pace snake).